The primary structure comprises 574 residues: Amino-acid acetyltransferase, mitochondrial (574 aa).

The transit peptide at 1 to 13 (MWRRIFAHELKYD) directs the protein to the mitochondrion. The region spanning 392–560 (KGAKPSSNSP…KRLREFMRSV (169 aa)) is the N-acetyltransferase domain.

The protein belongs to the acetyltransferase family. Interacts with the acetylglutamate kinase chain of AGR5,6.

The protein localises to the mitochondrion. It carries out the reaction L-glutamate + acetyl-CoA = N-acetyl-L-glutamate + CoA + H(+). It functions in the pathway amino-acid biosynthesis; L-arginine biosynthesis; N(2)-acetyl-L-ornithine from L-glutamate: step 1/4. Its activity is regulated as follows. Feedback inhibition by L-arginine. Functionally, N-acetylglutamate synthase involved in arginine biosynthesis. This chain is Amino-acid acetyltransferase, mitochondrial (ARG2), found in Saccharomyces cerevisiae (strain RM11-1a) (Baker's yeast).